The following is an 82-amino-acid chain: Antimicrobial peptide Smp43 (82 aa).

Positions Met-1–Ala-22 are cleaved as a signal peptide. Residues Glu-66 to Ser-82 constitute a propeptide that is removed on maturation.

It belongs to the non-disulfide-bridged peptide (NDBP) superfamily. Long chain multifunctional peptide (group 2) family. Expressed by the venom gland.

The protein resides in the secreted. It is found in the target cell membrane. Its function is as follows. Antimicrobial peptide with moderate activity against Gram-positive bacteria and Gram-negative bacteria, as well as low activity against fungi. Acts by inducing bacterial membrane disruption. Shows activity against B.subtilis (MIC=4 ug/ml), S.epidermidis (MIC=64 ug/ml), S.aureus (MIC=32 ug/ml), E.coli (MIC=128 ug/ml), K.pneumoniae (MIC=64 ug/ml), P.aeruginosa (MIC=64 ug/ml), and C.albicans (MIC=128 ug/ml). Does not show hemolysis activity. The sequence is that of Antimicrobial peptide Smp43 from Scorpio palmatus (Israeli golden scorpion).